The chain runs to 192 residues: Peptidyl-tRNA hydrolase (192 aa).

TRNA is bound at residue Y14. The Proton acceptor role is filled by H19. TRNA contacts are provided by Y64, N66, and N112.

This sequence belongs to the PTH family. As to quaternary structure, monomer.

It localises to the cytoplasm. It carries out the reaction an N-acyl-L-alpha-aminoacyl-tRNA + H2O = an N-acyl-L-amino acid + a tRNA + H(+). Functionally, hydrolyzes ribosome-free peptidyl-tRNAs (with 1 or more amino acids incorporated), which drop off the ribosome during protein synthesis, or as a result of ribosome stalling. Catalyzes the release of premature peptidyl moieties from peptidyl-tRNA molecules trapped in stalled 50S ribosomal subunits, and thus maintains levels of free tRNAs and 50S ribosomes. In Anaeromyxobacter dehalogenans (strain 2CP-1 / ATCC BAA-258), this protein is Peptidyl-tRNA hydrolase.